A 239-amino-acid polypeptide reads, in one-letter code: Glutathione S-transferase verG (239 aa).

The 84-residue stretch at 18-101 (KPLIFVMEGR…YLSNKYDAKR (84 aa)) folds into the GST N-terminal domain. Residues 107–237 (NAAENLEICN…ELDSRKEIAI (131 aa)) enclose the GST C-terminal domain.

Belongs to the GST superfamily.

It catalyses the reaction RX + glutathione = an S-substituted glutathione + a halide anion + H(+). It functions in the pathway mycotoxin biosynthesis. Glutathione S-transferase; part of the gene cluster that mediates the biosynthesis of 11'-deoxyverticillin A, one of the dimeric epipolythiodioxopiperazines (ETPs) from the verticillin family that act as mycotoxins. 11'-deoxyverticillin A is required for normal conidiation. The nonribosomal peptide synthetase verP is speculated to be responsible for condensation of amino acids to form the carbon skeleton of verticillin, whereas the cluster-specific tailoring enzymes are involved in further modifications leading to the production of 11'-deoxyverticillin A. The chain is Glutathione S-transferase verG from Clonostachys rogersoniana.